Consider the following 34-residue polypeptide: Protamine-Z1/Z2 (34 aa).

The segment at 1 to 34 (PRRRRRSSRPVRRRRRYRRSTVARRRRRVVRRRR) is disordered.

In terms of tissue distribution, testis.

The protein localises to the nucleus. It localises to the chromosome. Functionally, protamines substitute for histones in the chromatin of sperm during the haploid phase of spermatogenesis. They compact sperm DNA into a highly condensed, stable and inactive complex. The chain is Protamine-Z1/Z2 from Thunnus thynnus (Atlantic bluefin tuna).